The sequence spans 768 residues: Translation initiation factor IF-2, chloroplastic (768 aa).

Disordered stretches follow at residues 1–20 (MFLN…SNIN), 54–77 (KSES…DKKS), and 155–176 (KKVA…PPES). Over residues 54–65 (KSESHTGGEQHL) the composition is skewed to basic and acidic residues. Residues 160-176 (TPSQNSASIQSNSPPES) are compositionally biased toward polar residues. The tr-type G domain occupies 261–434 (KRPPIVTVMG…TLLAELEDLK (174 aa)). GTP is bound by residues 270–277 (GHVDHGKT), 320–324 (DTPGH), and 374–377 (SKID).

It belongs to the TRAFAC class translation factor GTPase superfamily. Classic translation factor GTPase family. IF-2 subfamily.

The protein localises to the plastid. It localises to the chloroplast. One of the essential components for the initiation of protein synthesis. Protects formylmethionyl-tRNA from spontaneous hydrolysis and promotes its binding to the 30S ribosomal subunits. Also involved in the hydrolysis of GTP during the formation of the 70S ribosomal complex. This is Translation initiation factor IF-2, chloroplastic (infB) from Pyropia yezoensis (Susabi-nori).